The following is a 343-amino-acid chain: Heat-inducible transcription repressor HrcA (343 aa).

This sequence belongs to the HrcA family.

Functionally, negative regulator of class I heat shock genes (grpE-dnaK-dnaJ and groELS operons). Prevents heat-shock induction of these operons. This chain is Heat-inducible transcription repressor HrcA, found in Mycobacterium tuberculosis (strain ATCC 25177 / H37Ra).